We begin with the raw amino-acid sequence, 130 residues long: UPF0251 protein MmarC5_0986 (130 aa).

Belongs to the UPF0251 family.

In Methanococcus maripaludis (strain C5 / ATCC BAA-1333), this protein is UPF0251 protein MmarC5_0986.